The primary structure comprises 377 residues: TelA-like protein SSP1345 (377 aa).

A compositionally biased stretch (basic and acidic residues) spans 1 to 18 (MAREQDSINSHPLDKYID). The tract at residues 1–39 (MAREQDSINSHPLDKYIDENSANESEIIKSSSQFSHEDQ) is disordered. Polar residues predominate over residues 20 to 34 (NSANESEIIKSSSQF).

It belongs to the TelA family.

The protein is TelA-like protein SSP1345 of Staphylococcus saprophyticus subsp. saprophyticus (strain ATCC 15305 / DSM 20229 / NCIMB 8711 / NCTC 7292 / S-41).